The following is a 671-amino-acid chain: tRNA 5-methylaminomethyl-2-thiouridine biosynthesis bifunctional protein MnmC (671 aa).

Positions M1–P245 are tRNA (mnm(5)s(2)U34)-methyltransferase. Positions V272–E671 are FAD-dependent cmnm(5)s(2)U34 oxidoreductase.

This sequence in the N-terminal section; belongs to the methyltransferase superfamily. tRNA (mnm(5)s(2)U34)-methyltransferase family. It in the C-terminal section; belongs to the DAO family. FAD is required as a cofactor.

It localises to the cytoplasm. It carries out the reaction 5-aminomethyl-2-thiouridine(34) in tRNA + S-adenosyl-L-methionine = 5-methylaminomethyl-2-thiouridine(34) in tRNA + S-adenosyl-L-homocysteine + H(+). Catalyzes the last two steps in the biosynthesis of 5-methylaminomethyl-2-thiouridine (mnm(5)s(2)U) at the wobble position (U34) in tRNA. Catalyzes the FAD-dependent demodification of cmnm(5)s(2)U34 to nm(5)s(2)U34, followed by the transfer of a methyl group from S-adenosyl-L-methionine to nm(5)s(2)U34, to form mnm(5)s(2)U34. The sequence is that of tRNA 5-methylaminomethyl-2-thiouridine biosynthesis bifunctional protein MnmC from Actinobacillus pleuropneumoniae serotype 5b (strain L20).